Consider the following 562-residue polypeptide: Sulfite reductase [NADPH] hemoprotein beta-component (562 aa).

4 residues coordinate [4Fe-4S] cluster: C428, C434, C473, and C477. C477 lines the siroheme pocket.

It belongs to the nitrite and sulfite reductase 4Fe-4S domain family. In terms of assembly, alpha(8)-beta(8). The alpha component is a flavoprotein, the beta component is a hemoprotein. Siroheme serves as cofactor. Requires [4Fe-4S] cluster as cofactor.

The catalysed reaction is hydrogen sulfide + 3 NADP(+) + 3 H2O = sulfite + 3 NADPH + 4 H(+). Its pathway is sulfur metabolism; hydrogen sulfide biosynthesis; hydrogen sulfide from sulfite (NADPH route): step 1/1. Functionally, component of the sulfite reductase complex that catalyzes the 6-electron reduction of sulfite to sulfide. This is one of several activities required for the biosynthesis of L-cysteine from sulfate. This Myxococcus xanthus (strain DK1622) protein is Sulfite reductase [NADPH] hemoprotein beta-component.